Here is a 180-residue protein sequence, read N- to C-terminus: PRA1 family protein F1 (180 aa).

4 consecutive transmembrane segments (helical) span residues 63–83, 84–104, 123–143, and 145–165; these read ANTV…VFLS, LIWN…WLFL, IVLI…DAKL, and IAVA…VRKT.

This sequence belongs to the PRA1 family. Interacts with PRA1F2. In terms of tissue distribution, expressed in hypocotyls, leaf bases and shoot apex.

The protein resides in the endosome membrane. In terms of biological role, may be involved in both secretory and endocytic intracellular trafficking in the endosomal/prevacuolar compartments. The sequence is that of PRA1 family protein F1 (PRA1F1) from Arabidopsis thaliana (Mouse-ear cress).